The primary structure comprises 665 residues: Kinesin-like protein KIF22 (665 aa).

Positions 43 to 368 (RVRVAVRLRP…LNFAARSKEV (326 aa)) constitute a Kinesin motor domain. 127-134 (GPTGAGKT) is a binding site for ATP. The interval 379–428 (QPHALGPVKLSQKELLGPPEAKRARGPEEEEIGSPEPMAAPASASQKLSP) is disordered. Residues serine 412, serine 427, and serine 452 each carry the phosphoserine modification. Residues 412 to 428 (SPEPMAAPASASQKLSP) are compositionally biased toward low complexity. Residue lysine 465 forms a Glycyl lysine isopeptide (Lys-Gly) (interchain with G-Cter in SUMO2) linkage. Residues 465–508 (KRERMVLMKTVEEKDLEIERLKTKQKELEAKMLAQKAEEKENHC) adopt a coiled-coil conformation. Residues serine 543, serine 562, and serine 581 each carry the phosphoserine modification.

It belongs to the TRAFAC class myosin-kinesin ATPase superfamily. Kinesin family. As to quaternary structure, interacts with FAM83D. Interacts with SIAH1. Post-translationally, ubiquitinated; mediated by SIAH1 and leading to its subsequent proteasomal degradation. As to expression, expressed in bone, cartilage, joint capsule, ligament, skin, and primary cultured chondrocytes.

It is found in the nucleus. Its subcellular location is the cytoplasm. The protein localises to the cytoskeleton. In terms of biological role, kinesin family member that is involved in spindle formation and the movements of chromosomes during mitosis and meiosis. Binds to microtubules and to DNA. Plays a role in congression of laterally attached chromosomes in NDC80-depleted cells. This is Kinesin-like protein KIF22 (KIF22) from Homo sapiens (Human).